The sequence spans 64 residues: Long neurotoxin MS5 (64 aa).

5 cysteine pairs are disulfide-bonded: Cys-3-Cys-24, Cys-6-Cys-11, Cys-17-Cys-41, Cys-45-Cys-57, and Cys-58-Cys-63.

This sequence belongs to the three-finger toxin family. Ancestral subfamily. In terms of tissue distribution, expressed by the venom gland.

Its subcellular location is the secreted. In terms of biological role, produces peripheral paralysis by blocking neuromuscular transmission at the postsynaptic site. Very weak inhibitor of the endogenous nicotinic acetylcholine receptors (nAChR) in the human rhabdomyosarcoma TE 671 cell line. This neurotoxin is lethal to zebrafish by injection at the back of the dorsolateral region, but is not toxic to mice by intraperitoneal injection. The protein is Long neurotoxin MS5 of Micrurus surinamensis (Surinam coral snake).